We begin with the raw amino-acid sequence, 279 residues long: Protein BASIC PENTACYSTEINE2 (279 aa).

The tract at residues 126–167 is disordered; that stretch reads TKKRKTNAKAGSTPKAKKPRKPKDENSNNNNNNNTNVTRVKP. Positions 152 to 161 are enriched in low complexity; the sequence is SNNNNNNNTN.

The protein belongs to the BBR/BPC family. Expressed in seedlings, leaves and pistils. Detected in the base of flowers and tips of carpels, in sepal and petal vasculature, in pollen grains, in young rosette, in the lateral and tip of primary roots, and in ovule at the exception of the outer integument.

The protein localises to the nucleus. In terms of biological role, transcriptional regulator that specifically binds to GA-rich elements (GAGA-repeats) present in regulatory sequences of genes involved in developmental processes. This is Protein BASIC PENTACYSTEINE2 from Arabidopsis thaliana (Mouse-ear cress).